The following is a 941-amino-acid chain: Pre-mRNA-processing factor 6 (941 aa).

The tract at residues 1-79 is disordered; sequence MNKKKKPFLG…DEDLNDTNYD (79 aa). Residues 39–65 show a composition bias toward basic and acidic residues; it reads DANDPVDDRHAPPGKRTVGDQMKKNQA. The span at 66 to 78 shows a compositional bias: acidic residues; the sequence is ADDDDEDLNDTNY. Ser143 carries the phosphoserine modification. Phosphothreonine is present on residues Thr180, Thr266, and Thr275. A Phosphoserine modification is found at Ser279. 9 HAT repeats span residues 384 to 416, 418 to 444, 445 to 476, 554 to 586, 588 to 620, 622 to 654, 689 to 721, 723 to 755, and 855 to 887; these read TDIR…LEEP, DARI…ARLE, TYEN…LEEA, NALE…FEKN, GTRE…SKWL, GDVP…LESE, GNIS…IEEQ, ELME…LEEK, and RKIT…FELQ.

Identified in the spliceosome B complex. Identified in the spliceosome C complex. Associates with the U5 snRNP particle. Component of the U4/U6-U5 tri-snRNP complex composed of the U4, U6 and U5 snRNAs and at least PRPF3, PRPF4, PRPF6, PRPF8, PRPF31, SNRNP200, TXNL4A, SNRNP40, DDX23, CD2BP2, PPIH, SNU13, EFTUD2, SART1 and USP39, LSm proteins LSm2-8 and Sm proteins. Interacts with ARAF1. Interacts with AR and NR3C1, but not ESR1, independently of the presence of hormones. Interacts with USH1G. Phosphorylated by PRP4K during spliceosome assembly.

The protein localises to the nucleus. It localises to the nucleoplasm. The protein resides in the nucleus speckle. Involved in pre-mRNA splicing as component of the U4/U6-U5 tri-snRNP complex, one of the building blocks of the spliceosome. Enhances dihydrotestosterone-induced transactivation activity of AR, as well as dexamethasone-induced transactivation activity of NR3C1, but does not affect estrogen-induced transactivation. In Mus musculus (Mouse), this protein is Pre-mRNA-processing factor 6 (Prpf6).